The following is a 38-amino-acid chain: Kappa-theraphotoxin-Hm2a (38 aa).

Intrachain disulfides connect cysteine 2-cysteine 16, cysteine 9-cysteine 21, and cysteine 15-cysteine 32. The residue at position 38 (phenylalanine 38) is a Phenylalanine amide.

The protein belongs to the neurotoxin 10 (Hwtx-1) family. 13 (Hntx-13) subfamily. As to expression, expressed by the venom gland.

The protein resides in the secreted. Its function is as follows. Inhibitor of voltage-gated potassium channels. It specifically inhibits Kv2.1/KCNB1 channels. This is Kappa-theraphotoxin-Hm2a from Heteroscodra maculata (Togo starburst tarantula).